Consider the following 402-residue polypeptide: CCA-adding enzyme (402 aa).

Gly32 and Arg35 together coordinate ATP. CTP-binding residues include Gly32 and Arg35. 2 residues coordinate Mg(2+): Asp45 and Asp47. ATP-binding residues include Arg116, Asp159, Arg162, Arg165, and Arg168. Residues Arg116, Asp159, Arg162, Arg165, and Arg168 each contribute to the CTP site.

It belongs to the tRNA nucleotidyltransferase/poly(A) polymerase family. Bacterial CCA-adding enzyme type 3 subfamily. In terms of assembly, homodimer. Requires Mg(2+) as cofactor.

The enzyme catalyses a tRNA precursor + 2 CTP + ATP = a tRNA with a 3' CCA end + 3 diphosphate. It catalyses the reaction a tRNA with a 3' CCA end + 2 CTP + ATP = a tRNA with a 3' CCACCA end + 3 diphosphate. Its function is as follows. Catalyzes the addition and repair of the essential 3'-terminal CCA sequence in tRNAs without using a nucleic acid template. Adds these three nucleotides in the order of C, C, and A to the tRNA nucleotide-73, using CTP and ATP as substrates and producing inorganic pyrophosphate. tRNA 3'-terminal CCA addition is required both for tRNA processing and repair. Also involved in tRNA surveillance by mediating tandem CCA addition to generate a CCACCA at the 3' terminus of unstable tRNAs. While stable tRNAs receive only 3'-terminal CCA, unstable tRNAs are marked with CCACCA and rapidly degraded. The sequence is that of CCA-adding enzyme from Streptococcus pyogenes serotype M3 (strain ATCC BAA-595 / MGAS315).